A 315-amino-acid polypeptide reads, in one-letter code: Hydrogenase-4 component C (315 aa).

Topologically, residues methionine 1–leucine 10 are periplasmic. The chain crosses the membrane as a helical span at residues valine 11–isoleucine 31. At serine 32–arginine 73 the chain is on the cytoplasmic side. A helical transmembrane segment spans residues leucine 74–isoleucine 94. Residues threonine 95–proline 98 are Periplasmic-facing. The chain crosses the membrane as a helical span at residues phenylalanine 99 to phenylalanine 119. Topologically, residues alanine 120–threonine 140 are cytoplasmic. A helical transmembrane segment spans residues leucine 141–glycine 161. Over serine 162–threonine 181 the chain is Periplasmic. Residues threonine 182–phenylalanine 202 form a helical membrane-spanning segment. Residues aspartate 203–lysine 228 are Cytoplasmic-facing. A helical transmembrane segment spans residues tryptophan 229–phenylalanine 249. Over glycine 250–serine 256 the chain is Periplasmic. Residues leucine 257 to leucine 277 form a helical membrane-spanning segment. Over alanine 278–arginine 289 the chain is Cytoplasmic. The helical transmembrane segment at phenylalanine 290 to phenylalanine 310 threads the bilayer. Topologically, residues tryptophan 311–leucine 315 are periplasmic.

The protein belongs to the complex I subunit 1 family.

It is found in the cell inner membrane. In terms of biological role, possible component of hydrogenase 4. The chain is Hydrogenase-4 component C from Escherichia coli (strain K12).